The following is a 60-amino-acid chain: Temporin-MT5 (60 aa).

The N-terminal stretch at 1–22 (MFTLKKPLLLLFFLATINLSLC) is a signal peptide. A propeptide spans 23 to 44 (EQERNAEEERRDEPDERNAEVE) (removed in mature form). Phenylalanine amide is present on F58.

The protein belongs to the frog skin active peptide (FSAP) family. Temporin subfamily. As to expression, expressed by the skin glands.

Its subcellular location is the secreted. Antimicrobial peptide. This Amolops mantzorum (Sichuan torrent frog) protein is Temporin-MT5.